We begin with the raw amino-acid sequence, 3108 residues long: Probable polyketide synthase 39 (3108 aa).

The Ketosynthase family 3 (KS3) domain maps to 9–440 (DDDVAVIGIG…GSNVCLILSE (432 aa)). Catalysis depends on for beta-ketoacyl synthase activity residues cysteine 181, histidine 320, and histidine 363. An acyl/malonyl transferase region spans residues 643 to 676 (GVSADIIIGHSLGEISSAYCSGMIDFQTLCYLTY). Serine 653 acts as the For acyl/malonyl transferase activity in catalysis. Residues 939-1068 (HEKIKSEGPS…GNFSLFKHNI (130 aa)) are N-terminal hotdog fold. Residues 939 to 1265 (HEKIKSEGPS…CTIAASNPDS (327 aa)) form the PKS/mFAS DH domain. Histidine 980 (proton acceptor; for dehydratase activity) is an active-site residue. Residues 1085-1265 (NFTSISKQDL…CTIAASNPDS (181 aa)) form a C-terminal hotdog fold region. Aspartate 1157 acts as the Proton donor; for dehydratase activity in catalysis. The disordered stretch occupies residues 1375-1435 (NNNNNNNNNN…NNNNNNNNNN (61 aa)). A Carrier domain is found at 2566–2643 (GNNEIIHSTI…QSIEIIKSAL (78 aa)). Serine 2603 is subject to O-(pantetheine 4'-phosphoryl)serine. A helical transmembrane segment spans residues 2702–2722 (IFLTGSTGFLGAYLLMELIKM).

Pantetheine 4'-phosphate is required as a cofactor.

The protein resides in the membrane. Functionally, probable polyketide synthase. The polypeptide is Probable polyketide synthase 39 (pks39) (Dictyostelium discoideum (Social amoeba)).